Reading from the N-terminus, the 734-residue chain is ATP-dependent RNA helicase SUV3L, mitochondrial (734 aa).

Residues 1–60 constitute a mitochondrion transit peptide; the sequence is MAAAAAIAAALLRRSTSSQHHRRILLLPLLSHLQRAAPRSPSPWDPPPHHRFFFSSDVTA. The tract at residues 58 to 88 is disordered; sequence VTAEGDSKPRPPLDGKQLWREVSTSEPATGA. Positions 62–76 are enriched in basic and acidic residues; the sequence is GDSKPRPPLDGKQLW. One can recognise a Helicase ATP-binding domain in the interval 198–356; that stretch reads FARAMRRRVV…RFKPLVVEAK (159 aa). 211-218 lines the ATP pocket; the sequence is GPTNSGKT. A Helicase C-terminal domain is found at 357 to 525; sequence TLLGDLKNVR…SFAIQFPDLT (169 aa). N-linked (GlcNAc...) asparagine glycans are attached at residues Asn-594 and Asn-614. The disordered stretch occupies residues 667–734; the sequence is ASWKPTSRQQ…QDPSSLNFVA (68 aa). Residues 684–693 are compositionally biased toward acidic residues; it reads EEDNDVEQAS. Residues 695–709 show a composition bias toward basic and acidic residues; sequence DNAKNDSEDGYERSI. A glycan (N-linked (GlcNAc...) asparagine) is linked at Asn-699. Positions 725 to 734 are enriched in polar residues; the sequence is QDPSSLNFVA.

Belongs to the helicase family. As to quaternary structure, homodimer; in free form. Component of the mitochondrial degradosome (mtEXO) complex which is a heteropentamer containing 2 copies of SUPV3L1 and 3 copies of PNPT1. Requires Mg(2+) as cofactor. Mn(2+) serves as cofactor.

Its subcellular location is the nucleus. The protein resides in the mitochondrion matrix. The protein localises to the mitochondrion nucleoid. The enzyme catalyses ATP + H2O = ADP + phosphate + H(+). In terms of biological role, major helicase player in mitochondrial RNA metabolism. Component of the mitochondrial degradosome (mtEXO) complex, that degrades 3' overhang double-stranded RNA with a 3'-to-5' directionality in an ATP-dependent manner. ATPase and ATP-dependent multisubstrate helicase, able to unwind double-stranded (ds) DNA and RNA, and RNA/DNA heteroduplexes in the 5'-to-3' direction. Plays a role in the RNA surveillance system in mitochondria; regulates the stability of mature mRNAs, the removal of aberrantly formed mRNAs and the rapid degradation of non coding processing intermediates. Confers salinity and drought stress tolerances by maintaining both photosynthesis and antioxidant machinery, probably via an increase in plant hormones levels such as gibberellic acid (GA(3)), the cytokinin zeatin (Z) and indole-3-acetic acid (IAA). This is ATP-dependent RNA helicase SUV3L, mitochondrial from Oryza sativa subsp. japonica (Rice).